Reading from the N-terminus, the 168-residue chain is G/U mismatch-specific DNA glycosylase (168 aa).

It belongs to the uracil-DNA glycosylase (UDG) superfamily. TDG/mug family. In terms of assembly, binds DNA as a monomer.

The protein localises to the cytoplasm. The catalysed reaction is Specifically hydrolyzes mismatched double-stranded DNA and polynucleotides, releasing free uracil.. Functionally, excises ethenocytosine and uracil, which can arise by alkylation or deamination of cytosine, respectively, from the corresponding mispairs with guanine in ds-DNA. It is capable of hydrolyzing the carbon-nitrogen bond between the sugar-phosphate backbone of the DNA and the mispaired base. The complementary strand guanine functions in substrate recognition. Required for DNA damage lesion repair in stationary-phase cells. The chain is G/U mismatch-specific DNA glycosylase from Escherichia coli (strain SMS-3-5 / SECEC).